The sequence spans 292 residues: Sulfhydrogenase 1 subunit gamma (292 aa).

An FAD-binding FR-type domain is found at 15–115 (YALHRVKVLK…RGPYGNGFPV (101 aa)). 4 residues coordinate [2Fe-2S] cluster: Cys253, Cys258, Cys261, and Cys273.

In terms of assembly, heterotetramer of alpha, beta, gamma and delta subunits. The nickel-containing alpha and delta subunits constitute the hydrogenase activity. The beta and gamma subunits (flavin-containing dimer) constitute the sulfur reductase activity. FAD serves as cofactor. [2Fe-2S] cluster is required as a cofactor.

The protein resides in the cytoplasm. It catalyses the reaction n sulfur + H2 = (n-1) sulfur + hydrogen sulfide + H(+). Its activity is regulated as follows. Stimulated by rubredoxin at pH 7.6 but not ferredoxin. Functionally, part of a bifunctional enzyme complex that functions as an NADPH-dependent hydrogen-evolving hydrogenase with sulfur reducing activity. May play a role in hydrogen cycling during fermentative growth. Activity not exhibited with NAD. The beta and gamma subunits form the sulfur reducing component that catalyzes the cytoplasmic production of hydrogen sulfide in the presence of elemental sulfur. Not active in the presence of sodium sulfate, sodium sulfite, sodium thiosulfate or cysteine. The chain is Sulfhydrogenase 1 subunit gamma from Pyrococcus furiosus (strain ATCC 43587 / DSM 3638 / JCM 8422 / Vc1).